The primary structure comprises 161 residues: Phosphopantetheine adenylyltransferase (161 aa).

Ser11 provides a ligand contact to substrate. ATP contacts are provided by residues 11 to 12 (SF) and His19. Lys43, Leu75, and Arg89 together coordinate substrate. ATP-binding positions include 90-92 (GLR), Glu100, and 125-131 (YSFISSS).

Belongs to the bacterial CoaD family. In terms of assembly, homohexamer. It depends on Mg(2+) as a cofactor.

It is found in the cytoplasm. The enzyme catalyses (R)-4'-phosphopantetheine + ATP + H(+) = 3'-dephospho-CoA + diphosphate. It participates in cofactor biosynthesis; coenzyme A biosynthesis; CoA from (R)-pantothenate: step 4/5. Reversibly transfers an adenylyl group from ATP to 4'-phosphopantetheine, yielding dephospho-CoA (dPCoA) and pyrophosphate. This is Phosphopantetheine adenylyltransferase from Staphylococcus epidermidis (strain ATCC 35984 / DSM 28319 / BCRC 17069 / CCUG 31568 / BM 3577 / RP62A).